Consider the following 115-residue polypeptide: FQLPPCQLINQTVSVEKEGCASCHPVETTICSGHCITKDPVIKIPFSKVYQHVCTYRDFYYKTFELPDCPPGVDPTVTYPVALSCHCGRCAMDTSDCTFESLQPDFCMNDIPFYY.

6 disulfide bridges follow: cysteine 6-cysteine 54, cysteine 20-cysteine 69, cysteine 23-cysteine 107, cysteine 31-cysteine 85, cysteine 35-cysteine 87, and cysteine 90-cysteine 97. Residue asparagine 10 is glycosylated (N-linked (GlcNAc...) asparagine).

This sequence belongs to the glycoprotein hormones subunit beta family. In terms of assembly, heterodimer of an alpha and a beta chain.

The protein localises to the secreted. In terms of biological role, involved in gametogenesis and steroidogenesis. This is Gonadotropin subunit beta-2 (cgbb) from Thunnus obesus (Bigeye tuna).